A 290-amino-acid polypeptide reads, in one-letter code: DegV domain-containing protein MG450 (290 aa).

Positions 3-289 (IAFLVDSVSN…INSYAFLIQT (287 aa)) constitute a DegV domain. Hexadecanoate contacts are provided by T65 and S97.

May bind long-chain fatty acids, such as palmitate, and may play a role in lipid transport or fatty acid metabolism. The polypeptide is DegV domain-containing protein MG450 (Mycoplasma genitalium (strain ATCC 33530 / DSM 19775 / NCTC 10195 / G37) (Mycoplasmoides genitalium)).